The chain runs to 269 residues: Phosphonates import ATP-binding protein PhnC (269 aa).

Residues 8 to 251 enclose the ABC transporter domain; the sequence is IHLYGASLRH…LLDALYANEQ (244 aa). ATP is bound at residue 40 to 47; it reads GPSGAGKS.

The protein belongs to the ABC transporter superfamily. Phosphonates importer (TC 3.A.1.9.1) family. In terms of assembly, the complex is composed of two ATP-binding proteins (PhnC), two transmembrane proteins (PhnE) and a solute-binding protein (PhnD).

The protein localises to the cell inner membrane. It carries out the reaction phosphonate(out) + ATP + H2O = phosphonate(in) + ADP + phosphate + H(+). Functionally, part of the ABC transporter complex PhnCDE involved in phosphonates import. Responsible for energy coupling to the transport system. In Pseudomonas putida (strain ATCC 47054 / DSM 6125 / CFBP 8728 / NCIMB 11950 / KT2440), this protein is Phosphonates import ATP-binding protein PhnC.